The primary structure comprises 510 residues: GMP synthase [glutamine-hydrolyzing] (510 aa).

The Glutamine amidotransferase type-1 domain maps to 5–195 (LVLVVDFGGQ…LFNVCNLKGD (191 aa)). The active-site Nucleophile is the Cys82. Active-site residues include His169 and Glu171. The GMPS ATP-PPase domain maps to 196-385 (WSMSSFAEQQ…LGIPHKLVWR (190 aa)). 223–229 (SGGVDSS) provides a ligand contact to ATP.

As to quaternary structure, homodimer.

The enzyme catalyses XMP + L-glutamine + ATP + H2O = GMP + L-glutamate + AMP + diphosphate + 2 H(+). Its pathway is purine metabolism; GMP biosynthesis; GMP from XMP (L-Gln route): step 1/1. Its function is as follows. Catalyzes the synthesis of GMP from XMP. The polypeptide is GMP synthase [glutamine-hydrolyzing] (Clostridium botulinum (strain Loch Maree / Type A3)).